The primary structure comprises 214 residues: MGKRIGLFGGTFDPVHIGHMRSAVEMAEQFALDELRLLPNARPPHRETPQVSAAQRLAMVERAVAGVERLTVDPRELQRDKPSYTIDTLESVRAELAADDQLFMLIGWDAFCGLPTWHRWEALLDHCHIVVLQRPDADSEPPESLRDLLAARSVADPQALKGPGGQITFVWQTPLAVSATQIRALLGAGRSVRFLVPDAVLNYIEAHHLYRAPH.

Belongs to the NadD family.

It carries out the reaction nicotinate beta-D-ribonucleotide + ATP + H(+) = deamido-NAD(+) + diphosphate. Its pathway is cofactor biosynthesis; NAD(+) biosynthesis; deamido-NAD(+) from nicotinate D-ribonucleotide: step 1/1. Functionally, catalyzes the reversible adenylation of nicotinate mononucleotide (NaMN) to nicotinic acid adenine dinucleotide (NaAD). The polypeptide is Probable nicotinate-nucleotide adenylyltransferase (Pseudomonas aeruginosa (strain UCBPP-PA14)).